The primary structure comprises 261 residues: Fructoselysine 6-kinase (261 aa).

The protein belongs to the carbohydrate kinase PfkB family. In terms of assembly, monomer.

The catalysed reaction is N(6)-(D-fructosyl)-L-lysine + ATP = N(6)-(6-phospho-D-fructosyl)-L-lysine + ADP + H(+). Its pathway is carbohydrate metabolism; fructoselysine degradation; D-glucose 6-phosphate and lysine from fructoselysine: step 1/2. Its function is as follows. Catalyzes the ATP-dependent phosphorylation of fructoselysine to fructoselysine 6-phosphate. Functions in a fructoselysine degradation pathway that allows E.coli to grow on fructoselysine or psicoselysine. To a much lesser extenst, is also able to phosphorylate psicoselysine. The polypeptide is Fructoselysine 6-kinase (Escherichia coli (strain K12)).